The primary structure comprises 478 residues: Glutamine synthetase (478 aa).

Lys14 is covalently cross-linked (Isoglutamyl lysine isopeptide (Lys-Gln) (interchain with Q-Cter in protein Pup)). The region spanning 16–100 (ENVEYVDIRF…MNFFVHDPFT (85 aa)) is the GS beta-grasp domain. The GS catalytic domain occupies 108-478 (PRNVARKAEN…PYEFSLYYDV (371 aa)). Mg(2+)-binding residues include Glu133 and Glu135. Glu214 is an ATP binding site. Residues Glu219 and Glu227 each coordinate Mg(2+). 230-232 (YKF) lines the ATP pocket. L-glutamate-binding positions include 271-272 (NG) and Gly272. Residue His276 participates in Mg(2+) binding. Residues 278–280 (HQS) and Ser280 contribute to the ATP site. L-glutamate-binding residues include Arg329, Glu335, and Arg347. Arg347, Arg352, and Lys361 together coordinate ATP. Glu366 is a Mg(2+) binding site. Residue Arg368 participates in L-glutamate binding. Tyr406 bears the O-AMP-tyrosine mark.

It belongs to the glutamine synthetase family. Oligomer of 12 subunits arranged in the form of two hexagons. Mg(2+) serves as cofactor.

The protein resides in the cytoplasm. The catalysed reaction is L-glutamate + NH4(+) + ATP = L-glutamine + ADP + phosphate + H(+). Its activity is regulated as follows. When cellular nitrogen levels are high, the C-terminal adenylyl transferase (AT) of GlnE inhibits GlnA by covalent transfer of an adenylyl group from ATP to Tyr-406. Conversely, when nitrogen levels are low, the N-terminal adenylyl removase (AR) of GlnE activates GlnA by removing the adenylyl group by phosphorolysis. The fully adenylated enzyme complex is inactive. Involved in nitrogen metabolism via ammonium assimilation. Catalyzes the ATP-dependent biosynthesis of glutamine from glutamate and ammonia. This is Glutamine synthetase from Mycolicibacterium smegmatis (strain ATCC 700084 / mc(2)155) (Mycobacterium smegmatis).